Consider the following 142-residue polypeptide: Acetyltransferase SG1711 (142 aa).

One can recognise an N-acetyltransferase domain in the interval 1–142 (MEIRVFRHDD…GKRLIEDQEY (142 aa)).

The protein belongs to the acetyltransferase family. YpeA subfamily.

The protein is Acetyltransferase SG1711 of Sodalis glossinidius (strain morsitans).